Here is a 322-residue protein sequence, read N- to C-terminus: Ferredoxin--NADP reductase (322 aa).

Residues Asp34, Gln42, Tyr47, Val87, Phe120, Asp279, and Thr320 each contribute to the FAD site.

This sequence belongs to the ferredoxin--NADP reductase type 2 family. In terms of assembly, homodimer. It depends on FAD as a cofactor.

The catalysed reaction is 2 reduced [2Fe-2S]-[ferredoxin] + NADP(+) + H(+) = 2 oxidized [2Fe-2S]-[ferredoxin] + NADPH. This is Ferredoxin--NADP reductase from Streptococcus sanguinis (strain SK36).